The primary structure comprises 225 residues: Biosynthetic peptidoglycan transglycosylase (225 aa).

Residues 12 to 32 (IWFVAWRFLLLFVIVLFLFRF) traverse the membrane as a helical segment.

The protein belongs to the glycosyltransferase 51 family.

It is found in the cell inner membrane. The catalysed reaction is [GlcNAc-(1-&gt;4)-Mur2Ac(oyl-L-Ala-gamma-D-Glu-L-Lys-D-Ala-D-Ala)](n)-di-trans,octa-cis-undecaprenyl diphosphate + beta-D-GlcNAc-(1-&gt;4)-Mur2Ac(oyl-L-Ala-gamma-D-Glu-L-Lys-D-Ala-D-Ala)-di-trans,octa-cis-undecaprenyl diphosphate = [GlcNAc-(1-&gt;4)-Mur2Ac(oyl-L-Ala-gamma-D-Glu-L-Lys-D-Ala-D-Ala)](n+1)-di-trans,octa-cis-undecaprenyl diphosphate + di-trans,octa-cis-undecaprenyl diphosphate + H(+). Its pathway is cell wall biogenesis; peptidoglycan biosynthesis. Its function is as follows. Peptidoglycan polymerase that catalyzes glycan chain elongation from lipid-linked precursors. This chain is Biosynthetic peptidoglycan transglycosylase, found in Marinomonas sp. (strain MWYL1).